The primary structure comprises 340 residues: Mitochondrial distribution and morphology protein 12 (340 aa).

The 321-residue stretch at 1-321 (MSIDLDWDGM…WPSWIKVSME (321 aa)) folds into the SMP-LTD domain. Disordered stretches follow at residues 79-107 (HYLPPLHPPQQRRSAPSTPHIHTNTTNPI), 161-184 (SVRESTAPRTPEEREQQPVPEDRE), and 319-340 (SMEDEDSDDEEGEEEGDQEDEH). Residues 89–106 (QRRSAPSTPHIHTNTTNP) are compositionally biased toward polar residues. Over residues 321-340 (EDEDSDDEEGEEEGDQEDEH) the composition is skewed to acidic residues.

The protein belongs to the MDM12 family. As to quaternary structure, component of the ER-mitochondria encounter structure (ERMES) or MDM complex, composed of MMM1, MDM10, MDM12 and MDM34. An MMM1 homodimer associates with one molecule of MDM12 on each side in a pairwise head-to-tail manner, and the SMP-LTD domains of MMM1 and MDM12 generate a continuous hydrophobic tunnel for phospholipid trafficking.

It localises to the mitochondrion outer membrane. The protein localises to the endoplasmic reticulum membrane. In terms of biological role, component of the ERMES/MDM complex, which serves as a molecular tether to connect the endoplasmic reticulum (ER) and mitochondria. Components of this complex are involved in the control of mitochondrial shape and protein biogenesis, and function in nonvesicular lipid trafficking between the ER and mitochondria. MDM12 is required for the interaction of the ER-resident membrane protein MMM1 and the outer mitochondrial membrane-resident beta-barrel protein MDM10. The MDM12-MMM1 subcomplex functions in the major beta-barrel assembly pathway that is responsible for biogenesis of all mitochondrial outer membrane beta-barrel proteins, and acts in a late step after the SAM complex. The MDM10-MDM12-MMM1 subcomplex further acts in the TOM40-specific pathway after the action of the MDM12-MMM1 complex. Essential for establishing and maintaining the structure of mitochondria and maintenance of mtDNA nucleoids. The protein is Mitochondrial distribution and morphology protein 12 of Yarrowia lipolytica (strain CLIB 122 / E 150) (Yeast).